Consider the following 176-residue polypeptide: Disulfide bond formation protein B (176 aa).

Topologically, residues methionine 1–alanine 14 are cytoplasmic. The helical transmembrane segment at tryptophan 15–tyrosine 31 threads the bilayer. Residues phenylalanine 32–valine 49 lie on the Periplasmic side of the membrane. Cysteines 41 and 44 form a disulfide. A helical membrane pass occupies residues alanine 50–proline 65. Over arginine 66–tyrosine 71 the chain is Cytoplasmic. A helical membrane pass occupies residues leucine 72–tryptophan 89. Residues alanine 90 to glutamine 144 lie on the Periplasmic side of the membrane. An intrachain disulfide couples cysteine 104 to cysteine 130. A helical membrane pass occupies residues tryptophan 145–serine 163. The Cytoplasmic segment spans residues glutamine 164–arginine 176.

Belongs to the DsbB family.

The protein localises to the cell inner membrane. In terms of biological role, required for disulfide bond formation in some periplasmic proteins. Acts by oxidizing the DsbA protein. In Yersinia pestis bv. Antiqua (strain Nepal516), this protein is Disulfide bond formation protein B.